Reading from the N-terminus, the 322-residue chain is Ferrochelatase (322 aa).

Positions 194 and 275 each coordinate Fe cation.

This sequence belongs to the ferrochelatase family.

Its subcellular location is the cytoplasm. It catalyses the reaction heme b + 2 H(+) = protoporphyrin IX + Fe(2+). It participates in porphyrin-containing compound metabolism; protoheme biosynthesis; protoheme from protoporphyrin-IX: step 1/1. Catalyzes the ferrous insertion into protoporphyrin IX. This chain is Ferrochelatase, found in Proteus mirabilis (strain HI4320).